We begin with the raw amino-acid sequence, 548 residues long: Undecaprenyl phosphate-alpha-4-amino-4-deoxy-L-arabinose arabinosyl transferase 1 (548 aa).

12 helical membrane-spanning segments follow: residues 11 to 31 (WLLFFLFILLTYFIPLETRLL), 89 to 109 (IVVVTSTLLTGWLIYKAAMVV), 114 to 134 (ALAFNAMTVFLSSFLVLAIGT), 137 to 157 (ILDPIVTLFVTAAMYSFLVAL), 180 to 200 (FLTKGFIAVVLPALVFLVMAI), 214 to 234 (IALLALAITAGPWVITVALQA), 263 to 283 (FYIPIVILGVLPWLGFLFGAL), 292 to 312 (GTLYFLLWFTLFFAFFSASKG), 314 to 334 (LLTYMLPCFVPLSILIAHYIE), 347 to 367 (VNASINIAFGLMGISAVIYSL), 382 to 402 (KIVLAISGFLFWSVIGAGALF), and 405 to 425 (TQFLTMFCSIGLSLVIGYAIP).

This sequence belongs to the glycosyltransferase 83 family.

The protein resides in the cell inner membrane. The catalysed reaction is 4-amino-4-deoxy-alpha-L-arabinopyranosyl di-trans,octa-cis-undecaprenyl phosphate + lipid IVA = lipid IIA + di-trans,octa-cis-undecaprenyl phosphate.. The protein operates within lipopolysaccharide metabolism; 4-amino-4-deoxy-beta-L-arabinose-lipid A biosynthesis. In terms of biological role, catalyzes the transfer of the L-Ara4N moiety of the glycolipid undecaprenyl phosphate-alpha-L-Ara4N to lipid A. The modified arabinose is attached to lipid A and is required for resistance to polymyxin and cationic antimicrobial peptides. In Proteus mirabilis (strain HI4320), this protein is Undecaprenyl phosphate-alpha-4-amino-4-deoxy-L-arabinose arabinosyl transferase 1.